A 762-amino-acid chain; its full sequence is 5-methyltetrahydropteroyltriglutamate--homocysteine methyltransferase (762 aa).

5-methyltetrahydropteroyltri-L-glutamate is bound by residues 17–20 and Lys-111; that span reads REWK. Residues 435-437 and Glu-488 contribute to the L-homocysteine site; that span reads IGS. Residues 435-437 and Glu-488 each bind L-methionine; that span reads IGS. 5-methyltetrahydropteroyltri-L-glutamate is bound by residues 519–520 and Trp-565; that span reads RC. An L-homocysteine-binding site is contributed by Asp-603. Asp-603 contacts L-methionine. 5-methyltetrahydropteroyltri-L-glutamate is bound at residue Glu-609. Residues His-645, Cys-647, and Glu-669 each coordinate Zn(2+). His-698 serves as the catalytic Proton donor. Residue Cys-730 participates in Zn(2+) binding.

The protein belongs to the vitamin-B12 independent methionine synthase family. It depends on Zn(2+) as a cofactor.

The catalysed reaction is 5-methyltetrahydropteroyltri-L-glutamate + L-homocysteine = tetrahydropteroyltri-L-glutamate + L-methionine. Its pathway is amino-acid biosynthesis; L-methionine biosynthesis via de novo pathway; L-methionine from L-homocysteine (MetE route): step 1/1. Functionally, catalyzes the transfer of a methyl group from 5-methyltetrahydrofolate to homocysteine resulting in methionine formation. The protein is 5-methyltetrahydropteroyltriglutamate--homocysteine methyltransferase of Bacillus anthracis (strain CDC 684 / NRRL 3495).